We begin with the raw amino-acid sequence, 606 residues long: Kelch-like protein 26 (606 aa).

Low complexity predominate over residues 1-19; that stretch reads MAESGGSSGSSQSPERPSS. The segment at 1–20 is disordered; sequence MAESGGSSGSSQSPERPSSL. At alanine 2 the chain carries N-acetylalanine. In terms of domain architecture, BTB spans 54 to 121; that stretch reads LDVVLTVNSE…AYSAEVTLDL (68 aa). In terms of domain architecture, BACK spans 156–257; that stretch reads CLHIGQMATT…QPAELVDSVQ (102 aa). Kelch repeat units lie at residues 301-352, 353-404, 406-451, 452-499, 501-550, and 552-599; these read SLVA…VLDN, FVYV…ALGG, LYAT…AAAG, RLYI…GAAG, IYAL…LLER, and IYIV…AVLL. Serine 430 bears the Phosphoserine mark.

May play a role in endo(sarco)plasmic reticulum (ER/SR) mitochondrial signaling. May be part of the ubiquitin-proteasome system (UPS) and affect ubiquitination and degradation of target substrates in cardiomyocytes. The protein is Kelch-like protein 26 (Klhl26) of Mus musculus (Mouse).